Reading from the N-terminus, the 181-residue chain is Nucleoside triphosphate/diphosphate phosphatase (181 aa).

Arginine 26 acts as the Proton donor in catalysis. Residues asparagine 90, aspartate 106, aspartate 108, aspartate 110, aspartate 123, and glutamate 126 each coordinate Mg(2+).

This sequence belongs to the Ntdp family. The cofactor is Mg(2+).

It catalyses the reaction a ribonucleoside 5'-triphosphate + H2O = a ribonucleoside 5'-diphosphate + phosphate + H(+). The catalysed reaction is a ribonucleoside 5'-diphosphate + H2O = a ribonucleoside 5'-phosphate + phosphate + H(+). In terms of biological role, has nucleoside phosphatase activity towards nucleoside triphosphates and nucleoside diphosphates. The polypeptide is Nucleoside triphosphate/diphosphate phosphatase (Ligilactobacillus salivarius (strain UCC118) (Lactobacillus salivarius)).